The sequence spans 146 residues: Snake venom vascular endothelial growth factor toxin (146 aa).

A signal peptide spans 1–24; the sequence is MAAYLLAVAILFCIQGWPLGTVQG. Q25 bears the Pyrrolidone carboxylic acid mark. 3 disulfides stabilise this stretch: C38-C80, C69-C115, and C73-C117. The disordered stretch occupies residues 118–146; that stretch reads RPRSASGVNSRKHKRNPEEGEQRAKFPFV. Positions 133 to 146 are enriched in basic and acidic residues; that stretch reads NPEEGEQRAKFPFV.

Belongs to the PDGF/VEGF growth factor family. Snake venom VEGF subfamily. As to quaternary structure, homodimer; disulfide-linked. Interacts with VEGF receptor-1 (FLT1) with a high affinity, whereas it binds to VEGF receptor-2 (KDR) with a low affinity. Does not bind VEGF receptor-3 (FLT4). In terms of tissue distribution, expressed by the venom gland.

The protein localises to the secreted. Snake venom VEGFs that may contribute to venom dispersion and prey subjugation by inducing vascular permeability and hypotension. This protein induces an increase in capillary permeability after intradermal injection, as well as a drastic hypotensive effect after intravenous injection. The hypotension is mediated by nitric oxide (NO), which is produced by VEGF-activated endothelium NO synthase. Also induces angiogenesis in vitro. Like other crotalid VEGFs, this protein interacts with VEGF receptor-1 (FLT1) with a high affinity, whereas it binds to VEGF receptor-2 (KDR) with a low affinity. The protein is Snake venom vascular endothelial growth factor toxin of Bothrops erythromelas (Caatinga lance head).